The primary structure comprises 379 residues: Lipid-A-disaccharide synthase (379 aa).

It belongs to the LpxB family.

The catalysed reaction is a lipid X + a UDP-2-N,3-O-bis[(3R)-3-hydroxyacyl]-alpha-D-glucosamine = a lipid A disaccharide + UDP + H(+). Its pathway is bacterial outer membrane biogenesis; LPS lipid A biosynthesis. Functionally, condensation of UDP-2,3-diacylglucosamine and 2,3-diacylglucosamine-1-phosphate to form lipid A disaccharide, a precursor of lipid A, a phosphorylated glycolipid that anchors the lipopolysaccharide to the outer membrane of the cell. In Aeromonas hydrophila subsp. hydrophila (strain ATCC 7966 / DSM 30187 / BCRC 13018 / CCUG 14551 / JCM 1027 / KCTC 2358 / NCIMB 9240 / NCTC 8049), this protein is Lipid-A-disaccharide synthase.